A 230-amino-acid chain; its full sequence is Demethylmenaquinone methyltransferase (230 aa).

S-adenosyl-L-methionine-binding positions include threonine 62, aspartate 80, 100 to 101, and serine 117; that span reads DG.

This sequence belongs to the class I-like SAM-binding methyltransferase superfamily. MenG/UbiE family.

It carries out the reaction a 2-demethylmenaquinol + S-adenosyl-L-methionine = a menaquinol + S-adenosyl-L-homocysteine + H(+). It functions in the pathway quinol/quinone metabolism; menaquinone biosynthesis; menaquinol from 1,4-dihydroxy-2-naphthoate: step 2/2. Its function is as follows. Methyltransferase required for the conversion of demethylmenaquinol (DMKH2) to menaquinol (MKH2). The chain is Demethylmenaquinone methyltransferase from Corynebacterium urealyticum (strain ATCC 43042 / DSM 7109).